Here is a 161-residue protein sequence, read N- to C-terminus: MRHRVGGWKLGRNTEHRRALLRNLVTSLIVEERIETTVPKAKAMRPHVEKMITLGKQGNVAARRQAAAYLMTSEAVDKLFNTISPRFGDREGGYLRIVRTGFRPGDGGEKAFIELLGSEKIIDEKREKRAAARAKRAEDNRKALEAQQAQAEAETTGETKA.

Residues A132–L144 are compositionally biased toward basic and acidic residues. The segment at A132 to A161 is disordered. Over residues E145–A161 the composition is skewed to low complexity.

Belongs to the bacterial ribosomal protein bL17 family. In terms of assembly, part of the 50S ribosomal subunit. Contacts protein L32.

The polypeptide is Large ribosomal subunit protein bL17 (Koribacter versatilis (strain Ellin345)).